The chain runs to 29 residues: uncharacterized protein (29 aa).

A helical transmembrane segment spans residues 8-28; sequence FALIVVLFILLIIVGTAFVGG.

The protein belongs to the SscA family.

The protein resides in the membrane. This is an uncharacterized protein from Bacillus subtilis (strain 168).